Here is a 351-residue protein sequence, read N- to C-terminus: tRNA uridine(34) hydroxylase (351 aa).

Positions 146 to 240 (DDPQALFVDM…YARRAREQGL (95 aa)) constitute a Rhodanese domain. The active-site Cysteine persulfide intermediate is Cys-200.

The protein belongs to the TrhO family.

The enzyme catalyses uridine(34) in tRNA + AH2 + O2 = 5-hydroxyuridine(34) in tRNA + A + H2O. Functionally, catalyzes oxygen-dependent 5-hydroxyuridine (ho5U) modification at position 34 in tRNAs. The polypeptide is tRNA uridine(34) hydroxylase (Sodalis glossinidius (strain morsitans)).